A 95-amino-acid chain; its full sequence is Co-chaperonin GroES (95 aa).

It belongs to the GroES chaperonin family. In terms of assembly, heptamer of 7 subunits arranged in a ring. Interacts with the chaperonin GroEL.

The protein localises to the cytoplasm. Together with the chaperonin GroEL, plays an essential role in assisting protein folding. The GroEL-GroES system forms a nano-cage that allows encapsulation of the non-native substrate proteins and provides a physical environment optimized to promote and accelerate protein folding. GroES binds to the apical surface of the GroEL ring, thereby capping the opening of the GroEL channel. The chain is Co-chaperonin GroES from Rhodobacter capsulatus (Rhodopseudomonas capsulata).